A 1074-amino-acid polypeptide reads, in one-letter code: Semaphorin-5A (1074 aa).

Positions 1–22 are cleaved as a signal peptide; the sequence is MKGTCVIAWLFSSLGLWRLAHP. Residues 23–968 are Extracellular-facing; sequence EAQGTTQCQR…EEKRCGEFNM (946 aa). Residues 35–484 form the Sema domain; the sequence is HPVISYKEIG…LREHVVKIPL (450 aa). Disulfide bonds link Cys104-Cys114 and Cys131-Cys140. Asn142, Asn168, Asn227, and Asn277 each carry an N-linked (GlcNAc...) asparagine glycan. Disulfide bonds link Cys254/Cys357 and Cys278/Cys320. N-linked (GlcNAc...) asparagine glycans are attached at residues Asn323, Asn367, and Asn437. 2 disulfide bridges follow: Cys487/Cys504 and Cys496/Cys513. N-linked (GlcNAc...) asparagine glycosylation is found at Asn536 and Asn591. TSP type-1 domains follow at residues 540-593, 595-651, 653-702, 707-765, 784-839, 841-896, and 897-944; these read DGHF…ANCS, NGGW…LLCP, HMFW…NPCP, TTPW…GCST, NGAW…LPCP, DGVW…QPCP, and ESWS…VFDS. Intrachain disulfides connect Cys607-Cys644, Cys611-Cys650, Cys622-Cys634, Cys665-Cys696, Cys669-Cys701, and Cys680-Cys686. N-linked (GlcNAc...) asparagine glycosylation is present at Asn717. 6 disulfides stabilise this stretch: Cys796–Cys833, Cys800–Cys838, Cys811–Cys823, Cys853–Cys890, Cys857–Cys895, and Cys868–Cys880. An N-linked (GlcNAc...) asparagine glycan is attached at Asn933. A helical transmembrane segment spans residues 969-989; it reads FHMIAVGLSSSILGCLLTLLV. The Cytoplasmic segment spans residues 990–1074; it reads YTYCQRYQQQ…FTDLNNYDEY (85 aa).

It belongs to the semaphorin family. As to quaternary structure, binds PLXNB3.

It is found in the membrane. Bifunctional axonal guidance cue regulated by sulfated proteoglycans; attractive effects result from interactions with heparan sulfate proteoglycans (HSPGs), while the inhibitory effects depend on interactions with chondroitin sulfate proteoglycans (CSPGs). Ligand for receptor PLXNB3. In glioma cells, SEMA5A stimulation of PLXNB3 results in the disassembly of F-actin stress fibers, disruption of focal adhesions and cellular collapse as well as inhibition of cell migration and invasion through ARHGDIA-mediated inactivation of RAC1. May promote angiogenesis by increasing endothelial cell proliferation and migration and inhibiting apoptosis. This chain is Semaphorin-5A (SEMA5A), found in Homo sapiens (Human).